Here is a 78-residue protein sequence, read N- to C-terminus: RNA-binding protein Hfq (78 aa).

Residues 10–69 (DPFLNTLRKEHVPVSIYLVNGIKLQGQIESFDQYVVLLRNTVTQMVYKHAISTVVPARAV) enclose the Sm domain.

It belongs to the Hfq family. Homohexamer.

Functionally, RNA chaperone that binds small regulatory RNA (sRNAs) and mRNAs to facilitate mRNA translational regulation in response to envelope stress, environmental stress and changes in metabolite concentrations. Also binds with high specificity to tRNAs. This chain is RNA-binding protein Hfq, found in Bordetella petrii (strain ATCC BAA-461 / DSM 12804 / CCUG 43448).